Here is a 310-residue protein sequence, read N- to C-terminus: Porphobilinogen deaminase (310 aa).

Cys-242 carries the post-translational modification S-(dipyrrolylmethanemethyl)cysteine.

The protein belongs to the HMBS family. As to quaternary structure, monomer. Dipyrromethane is required as a cofactor.

The enzyme catalyses 4 porphobilinogen + H2O = hydroxymethylbilane + 4 NH4(+). The protein operates within porphyrin-containing compound metabolism; protoporphyrin-IX biosynthesis; coproporphyrinogen-III from 5-aminolevulinate: step 2/4. Its function is as follows. Tetrapolymerization of the monopyrrole PBG into the hydroxymethylbilane pre-uroporphyrinogen in several discrete steps. The sequence is that of Porphobilinogen deaminase from Psychromonas ingrahamii (strain DSM 17664 / CCUG 51855 / 37).